A 207-amino-acid polypeptide reads, in one-letter code: Protein GET1 (207 aa).

The Lumenal portion of the chain corresponds to 1–4; sequence MPSL. A helical transmembrane segment spans residues 5–24; the sequence is LISVLFLHIAIYIINTIGAS. The Cytoplasmic segment spans residues 25–110; sequence TIDSLLWLIY…LFDVAVKALR (86 aa). The stretch at 44–97 forms a coiled coil; the sequence is MAREQHQMKLEVVQLKREMNATSSQDEFAKWAKLRRRHDKALEEYEVKNKQFSR. The helical transmembrane segment at 111 to 131 threads the bilayer; it reads WAGTSGLILLLQFWFSKTPIF. The Lumenal segment spans residues 132 to 155; the sequence is TLPPSWIPWQVEWVLSFPRAPMGT. The chain crosses the membrane as a helical span at residues 156–172; that stretch reads VSIQVWGGACAVMVALV. The Cytoplasmic portion of the chain corresponds to 173 to 207; it reads GEAIGATVRYLYGSKDSMEAIKVGAGAVEKEKKRQ.

The protein belongs to the WRB/GET1 family. Interacts with GET3.

It is found in the endoplasmic reticulum membrane. Functionally, required for the post-translational delivery of tail-anchored (TA) proteins to the endoplasmic reticulum. Acts as a membrane receptor for soluble GET3, which recognizes and selectively binds the transmembrane domain of TA proteins in the cytosol. This Paracoccidioides lutzii (strain ATCC MYA-826 / Pb01) (Paracoccidioides brasiliensis) protein is Protein GET1.